Reading from the N-terminus, the 114-residue chain is Transcription factor S1 (114 aa).

Residues 1 to 43 form an N-ZR region; sequence MIVVKFCPKCNSMMVPKKSNGKNVYRCTKCGYEKEVPETTIVV. Zn(2+) is bound by residues C7, C10, C27, C30, C75, and C78. A C-ZR region spans residues 63–114; it reads MPSGAQKIKGVLCPSCKNDEAYFWILQTRRADEPPTRFYKCTKCGKVWREYE. The TFIIS-type zinc finger occupies 71–111; the sequence is KGVLCPSCKNDEAYFWILQTRRADEPPTRFYKCTKCGKVWR. Active-site residues include D94 and E95. Zn(2+) is bound by residues C103 and C106.

Belongs to the archaeal RpoM/eukaryotic RPA12/RPB9/RPC11 RNA polymerase family. In terms of assembly, interacts with RNA polymerase; probably competes with TFS4 for the same binding site. It depends on Zn(2+) as a cofactor.

Functionally, induces RNA cleavage activity in the RNA polymerase. Induces rapid cleavage of a stalled transcription elongation complex with a 2-nucleotide reduction at the 3' end of the nascent RNA. Truncated RNA is able to resume elongation. During transcription elongation it enhances processivity. Involved in transcriptional proofreading and fidelity. Misincorporation of nucleotides during elongation of transcription leads to arrested elongation complexes which are rescued by TFS-promoted removal of a dinucleotide from the 3'-end. TFS1 is able to induce a cleavage resynthesis cycle in stalled elongation complexes (resulting from the next missing nucleotide or a reduced incorporation rate of a wrong nucleotide) preventing misincorporation and enabling proofreading in a post-incorporation manner. Pausing of elongation complexes is the main determinant of TFS-induced RNA cleavage. The protein is Transcription factor S1 of Saccharolobus solfataricus (strain ATCC 35092 / DSM 1617 / JCM 11322 / P2) (Sulfolobus solfataricus).